An 88-amino-acid chain; its full sequence is Small ribosomal subunit protein bS20 (88 aa).

Disordered stretches follow at residues Met1–Arg29 and Lys69–Ala88.

The protein belongs to the bacterial ribosomal protein bS20 family.

Its function is as follows. Binds directly to 16S ribosomal RNA. This is Small ribosomal subunit protein bS20 from Polynucleobacter asymbioticus (strain DSM 18221 / CIP 109841 / QLW-P1DMWA-1) (Polynucleobacter necessarius subsp. asymbioticus).